A 324-amino-acid polypeptide reads, in one-letter code: Elongation factor Ts, mitochondrial (324 aa).

A mitochondrion-targeting transit peptide spans 1-44; that stretch reads MSLLRSLRFFPVACTGRSARAVLLQPSQPWLTFHAGPSLSSAAS. N6-succinyllysine is present on residues lysine 75, lysine 132, and lysine 191. Serine 269 is modified (phosphoserine).

This sequence belongs to the EF-Ts family.

It is found in the mitochondrion. Its function is as follows. Associates with the EF-Tu.GDP complex and induces the exchange of GDP to GTP. It remains bound to the aminoacyl-tRNA.EF-Tu.GTP complex up to the GTP hydrolysis stage on the ribosome. This Mus musculus (Mouse) protein is Elongation factor Ts, mitochondrial (Tsfm).